The sequence spans 799 residues: ATP synthase subunit alpha (799 aa).

An ATP synthase alpha chain region spans residues 1–549 (MTDNKNHSLI…EEVSLKPTTE (549 aa)). 170–177 (GDRQTGKT) provides a ligand contact to ATP. The unknown stretch occupies residues 550-799 (TSEAVQIEEK…KGPSGFTYLK (250 aa)).

The protein belongs to the ATPase alpha/beta chains family. As to quaternary structure, F-type ATPases have 2 components, CF(1) - the catalytic core - and CF(0) - the membrane proton channel. CF(1) has five subunits: alpha(3), beta(3), gamma(1), delta(1), epsilon(1). CF(0) has three main subunits: a(1), b(2) and c(9-12). The alpha and beta chains form an alternating ring which encloses part of the gamma chain. CF(1) is attached to CF(0) by a central stalk formed by the gamma and epsilon chains, while a peripheral stalk is formed by the delta and b chains.

It is found in the cell membrane. It carries out the reaction ATP + H2O + 4 H(+)(in) = ADP + phosphate + 5 H(+)(out). Functionally, produces ATP from ADP in the presence of a proton gradient across the membrane. The alpha chain is a regulatory subunit. The protein is ATP synthase subunit alpha (atpA) of Ureaplasma parvum serovar 3 (strain ATCC 27815 / 27 / NCTC 11736).